The primary structure comprises 327 residues: Regulatory protein MsrR (327 aa).

The segment covering 1–18 has biased composition (basic and acidic residues); that stretch reads MDKETNDNEYRRQSEHRT. Residues 1-24 are disordered; it reads MDKETNDNEYRRQSEHRTSAPKRK. The Cytoplasmic portion of the chain corresponds to 1–31; that stretch reads MDKETNDNEYRRQSEHRTSAPKRKKKKKIRK. Residues 32–52 traverse the membrane as a helical; Signal-anchor for type II membrane protein segment; that stretch reads LPIILLIVVILLIALVVYIVH. Residues 53–327 are Extracellular-facing; that stretch reads SYNSGVEYAK…QAIKDFLDED (275 aa).

This sequence belongs to the LytR/CpsA/Psr (LCP) family.

Its subcellular location is the cell membrane. Involved in SarA attenuation. Affects resistance to oxacillin and teicoplanin, as well as the synthesis of virulence factors. The protein is Regulatory protein MsrR (msrR) of Staphylococcus aureus (strain Mu50 / ATCC 700699).